Reading from the N-terminus, the 262-residue chain is Inactive snake venom serine proteinase 13 (262 aa).

A signal peptide spans 1–18 (MGLIRVLANLLILQLSYA). A propeptide spanning residues 19-24 (QKSSEL) is cleaved from the precursor. The region spanning 25 to 250 (VIGGDECNIN…HLDWIQSIIA (226 aa)) is the Peptidase S1 domain. 6 cysteine pairs are disulfide-bonded: cysteine 31-cysteine 162, cysteine 49-cysteine 65, cysteine 97-cysteine 257, cysteine 141-cysteine 211, cysteine 173-cysteine 190, and cysteine 201-cysteine 226. 3 N-linked (GlcNAc...) asparagine glycosylation sites follow: asparagine 78, asparagine 102, and asparagine 153.

Belongs to the peptidase S1 family. Snake venom subfamily. Monomer. Expressed by the venom gland.

It localises to the secreted. In Crotalus adamanteus (Eastern diamondback rattlesnake), this protein is Inactive snake venom serine proteinase 13.